The sequence spans 76 residues: Spermatid nuclear transition protein 3 (76 aa).

Positions 1-11 (AKVTEKSWQPQ) are enriched in polar residues. 2 disordered regions span residues 1–34 (AKVT…GKVR) and 56–76 (VITT…ETIP). The segment covering 16 to 34 (KRWKKRKTPSQPRSRGKVR) has biased composition (basic residues).

It localises to the nucleus. The protein localises to the chromosome. Its function is as follows. Involved in nuclear basic protein transition: histones are replaced by spermatid specific proteins which are themselves replaced by protamines in late spermatids. The chain is Spermatid nuclear transition protein 3 (TNP3) from Sus scrofa (Pig).